A 224-amino-acid chain; its full sequence is MAAPSEVAAIAPGEGDGGGGGFGSWLDGRLEALGVDRAVYGAYILGILQEEEEEEKLDALQGILSAFLEEDSLLNICKEIVERWSETQNVVTKVKKEDEVQAIATLIEKQAQIVVKPRMVSEEEKQRKAALLAQYADVTDEEDEADEKDDSGATTMNIGSDKLLFRNTNVEDVLNARKLERDSLRDESQRKKEQDKLQRERDKLAKQERKEKEKKRTQRGERKR.

K95 participates in a covalent cross-link: Glycyl lysine isopeptide (Lys-Gly) (interchain with G-Cter in SUMO1). 2 coiled-coil regions span residues 121–145 (SEEEKQRKAALLAQYADVTDEEDEA) and 177–218 (RKLE…KRTQ). Acidic residues predominate over residues 138–149 (VTDEEDEADEKD). Disordered stretches follow at residues 138–157 (VTDEEDEADEKDDSGATTMN) and 176–224 (ARKL…ERKR). T139 is subject to Phosphothreonine. Residues 176 to 211 (ARKLERDSLRDESQRKKEQDKLQRERDKLAKQERKE) are compositionally biased toward basic and acidic residues. Basic residues predominate over residues 212–224 (KEKKRTQRGERKR).

The protein belongs to the CCDC43 family.

In Homo sapiens (Human), this protein is Coiled-coil domain-containing protein 43 (CCDC43).